The sequence spans 462 residues: UDP-N-acetylmuramate--L-alanine ligase (462 aa).

Position 117–123 (Gly-117–Thr-123) interacts with ATP.

It belongs to the MurCDEF family.

Its subcellular location is the cytoplasm. It catalyses the reaction UDP-N-acetyl-alpha-D-muramate + L-alanine + ATP = UDP-N-acetyl-alpha-D-muramoyl-L-alanine + ADP + phosphate + H(+). It functions in the pathway cell wall biogenesis; peptidoglycan biosynthesis. Cell wall formation. The sequence is that of UDP-N-acetylmuramate--L-alanine ligase from Streptomyces coelicolor (strain ATCC BAA-471 / A3(2) / M145).